The following is a 95-amino-acid chain: UPF0132 membrane protein AF_0736 (95 aa).

Helical transmembrane passes span 2–22 (CYTLGFVTGVLFLLFDRSPFV), 32–52 (TFSTITALVILLPVLPGGALL), and 55–75 (VVMAFSIILWAFCIVKASRGE).

Belongs to the UPF0132 family.

It is found in the cell membrane. The chain is UPF0132 membrane protein AF_0736 from Archaeoglobus fulgidus (strain ATCC 49558 / DSM 4304 / JCM 9628 / NBRC 100126 / VC-16).